The following is a 118-amino-acid chain: Small ribosomal subunit protein uS13 (118 aa).

Residues 94–118 (SLPVRGQRTKTNARTRKGPRKPIKK) form a disordered region.

This sequence belongs to the universal ribosomal protein uS13 family. As to quaternary structure, part of the 30S ribosomal subunit. Forms a loose heterodimer with protein S19. Forms two bridges to the 50S subunit in the 70S ribosome.

Located at the top of the head of the 30S subunit, it contacts several helices of the 16S rRNA. In the 70S ribosome it contacts the 23S rRNA (bridge B1a) and protein L5 of the 50S subunit (bridge B1b), connecting the 2 subunits; these bridges are implicated in subunit movement. Contacts the tRNAs in the A and P-sites. The polypeptide is Small ribosomal subunit protein uS13 (Actinobacillus pleuropneumoniae serotype 5b (strain L20)).